Here is a 368-residue protein sequence, read N- to C-terminus: tRNA-specific 2-thiouridylase MnmA (368 aa).

Residues 23–30 (ALSGGVDS) and leucine 49 contribute to the ATP site. Cysteine 110 (nucleophile) is an active-site residue. An intrachain disulfide couples cysteine 110 to cysteine 209. Glycine 135 contributes to the ATP binding site. An interaction with tRNA region spans residues 159-161 (KDQ). Cysteine 209 acts as the Cysteine persulfide intermediate in catalysis. Residues 314 to 315 (RY) are interaction with tRNA.

It belongs to the MnmA/TRMU family.

The protein resides in the cytoplasm. It carries out the reaction S-sulfanyl-L-cysteinyl-[protein] + uridine(34) in tRNA + AH2 + ATP = 2-thiouridine(34) in tRNA + L-cysteinyl-[protein] + A + AMP + diphosphate + H(+). In terms of biological role, catalyzes the 2-thiolation of uridine at the wobble position (U34) of tRNA, leading to the formation of s(2)U34. The chain is tRNA-specific 2-thiouridylase MnmA from Synechococcus sp. (strain JA-2-3B'a(2-13)) (Cyanobacteria bacterium Yellowstone B-Prime).